A 355-amino-acid polypeptide reads, in one-letter code: Chorismate synthase (355 aa).

NADP(+) is bound at residue Arg-46. FMN is bound by residues 123-125 (RAS), 233-234 (NG), Gly-273, 288-292 (KPTPS), and Arg-314.

It belongs to the chorismate synthase family. In terms of assembly, homotetramer. FMNH2 is required as a cofactor.

The catalysed reaction is 5-O-(1-carboxyvinyl)-3-phosphoshikimate = chorismate + phosphate. It participates in metabolic intermediate biosynthesis; chorismate biosynthesis; chorismate from D-erythrose 4-phosphate and phosphoenolpyruvate: step 7/7. Functionally, catalyzes the anti-1,4-elimination of the C-3 phosphate and the C-6 proR hydrogen from 5-enolpyruvylshikimate-3-phosphate (EPSP) to yield chorismate, which is the branch point compound that serves as the starting substrate for the three terminal pathways of aromatic amino acid biosynthesis. This reaction introduces a second double bond into the aromatic ring system. In Campylobacter concisus (strain 13826), this protein is Chorismate synthase.